Here is a 256-residue protein sequence, read N- to C-terminus: uncharacterized protein (256 aa).

29–36 (GDDHSGKT) is an ATP binding site.

This is an uncharacterized protein from Saccharomyces cerevisiae (strain ATCC 204508 / S288c) (Baker's yeast).